A 905-amino-acid polypeptide reads, in one-letter code: Probable coatomer subunit gamma (905 aa).

HEAT repeat units lie at residues 265-302 (TQFR…NISD), 303-340 (DDLQ…TRPH), 374-412 (DESV…KFPR), 414-450 (QDSM…YIPE), and 525-563 (KFVQ…RDAF). S604 is subject to Phosphoserine.

Belongs to the COPG family. As to quaternary structure, oligomeric complex that consists of at least the alpha, beta, beta', gamma, delta, epsilon and zeta subunits.

It is found in the cytoplasm. The protein localises to the golgi apparatus membrane. The protein resides in the cytoplasmic vesicle. Its subcellular location is the COPI-coated vesicle membrane. Functionally, the coatomer is a cytosolic protein complex that binds to dilysine motifs and reversibly associates with Golgi non-clathrin-coated vesicles, which further mediate biosynthetic protein transport from the ER, via the Golgi up to the trans Golgi network. Coatomer complex is required for budding from Golgi membranes, and is essential for the retrograde Golgi-to-ER transport of dilysine-tagged proteins. The chain is Probable coatomer subunit gamma (sec21) from Schizosaccharomyces pombe (strain 972 / ATCC 24843) (Fission yeast).